Here is a 266-residue protein sequence, read N- to C-terminus: Type III pantothenate kinase (266 aa).

9-16 (DAGNSRIK) contacts ATP. Residues Tyr-96 and 103-106 (GSDR) contribute to the substrate site. The Proton acceptor role is filled by Asp-105. Position 129 (Thr-129) interacts with ATP. Thr-189 is a binding site for substrate.

Belongs to the type III pantothenate kinase family. Homodimer. Requires NH4(+) as cofactor. K(+) is required as a cofactor.

Its subcellular location is the cytoplasm. The enzyme catalyses (R)-pantothenate + ATP = (R)-4'-phosphopantothenate + ADP + H(+). It participates in cofactor biosynthesis; coenzyme A biosynthesis; CoA from (R)-pantothenate: step 1/5. Its function is as follows. Catalyzes the phosphorylation of pantothenate (Pan), the first step in CoA biosynthesis. This is Type III pantothenate kinase from Burkholderia cenocepacia (strain ATCC BAA-245 / DSM 16553 / LMG 16656 / NCTC 13227 / J2315 / CF5610) (Burkholderia cepacia (strain J2315)).